The chain runs to 284 residues: L-ribulose-5-phosphate 3-epimerase UlaE (284 aa).

This sequence belongs to the L-ribulose-5-phosphate 3-epimerase family.

It catalyses the reaction L-ribulose 5-phosphate = L-xylulose 5-phosphate. Its pathway is cofactor degradation; L-ascorbate degradation; D-xylulose 5-phosphate from L-ascorbate: step 3/4. Functionally, catalyzes the isomerization of L-xylulose-5-phosphate to L-ribulose-5-phosphate. Is involved in the anaerobic L-ascorbate utilization. In Escherichia coli (strain ATCC 8739 / DSM 1576 / NBRC 3972 / NCIMB 8545 / WDCM 00012 / Crooks), this protein is L-ribulose-5-phosphate 3-epimerase UlaE.